The primary structure comprises 1745 residues: ADAMTS-like protein 1 (1745 aa).

Residues 1–28 (MECCRRAAPGTPLLVLAFLLLSSRTARS) form the signal peptide. In terms of domain architecture, TSP type-1 1 spans 33 to 82 (EGLWDAWGPWSECSRTCGGGASYSLRRCLSSKSCEGRNIRYRTCSNVDCP). 3 cysteine pairs are disulfide-bonded: Cys45/Cys76, Cys49/Cys81, and Cys60/Cys66. N-linked (GlcNAc...) asparagine glycosylation occurs at Asn251. O-linked (Fuc...) serine glycans are attached at residues Ser310 and Ser391. 6 TSP type-1 domains span residues 376–424 (PLPR…MYTP), 436–493 (DCPK…TPCY), 522–584 (EEPS…GPCN), 607–667 (ELYD…DPCP), 703–762 (CPPA…KKDD), and 763–825 (CPSE…ATCA). O-linked (Fuc...) threonine glycosylation occurs at Thr451. Disulfide bonds link Cys534–Cys578, Cys538–Cys583, and Cys549–Cys567. Disulfide bonds link Cys775/Cys819, Cys779/Cys824, Cys790/Cys807, and Cys874/Cys922. In terms of domain architecture, Ig-like C2-type 1 spans 836–938 (PHIAAARNIY…EQFVIKLIGG (103 aa)). 2 disordered regions span residues 966–991 (EALQTHKHQNGIFSNGSKAEKRGLTA) and 1114–1137 (VSGFSSSLRSSSGEAGGGSRRPHR). The segment covering 1115-1126 (SGFSSSLRSSSG) has biased composition (low complexity). Ig-like C2-type domains lie at 1139–1241 (PAIL…IAVT), 1261–1352 (PTVT…TQLL), and 1378–1468 (PSVL…ASLV). 3 disulfides stabilise this stretch: Cys1177–Cys1225, Cys1283–Cys1336, and Cys1401–Cys1452. TSP type-1 domains lie at 1528–1591 (CPSR…QLCV) and 1649–1709 (CSVH…TPCE). Residues 1709-1745 (ENTECRDTTRYCEKVRQLKLCQLGQFRSRCCGTCGKA) form the PLAC domain.

Monomer. Glycosylated. O-fucosylated by POFUT2 on a serine or a threonine residue found within the consensus sequence C1-X(2)-(S/T)-C2-G of the TSP type-1 repeat domains where C1 and C2 are the first and second cysteine residue of the repeat, respectively. Fucosylated repeats can then be further glycosylated by the addition of a beta-1,3-glucose residue by the glucosyltransferase, B3GALTL. Fucosylation mediates the efficient secretion of ADAMTS family members. Can also be C-glycosylated with one or two mannose molecules on tryptophan residues within the consensus sequence W-X-X-W of the TPRs, and N-glycosylated. These other glycosylations can also facilitate secretion. In terms of processing, disulfide bonds are present.

It is found in the secreted. The protein localises to the extracellular space. Its subcellular location is the extracellular matrix. In Mus musculus (Mouse), this protein is ADAMTS-like protein 1 (Adamtsl1).